We begin with the raw amino-acid sequence, 461 residues long: Lysosomal proton-coupled steroid conjugate and bile acid symporter SLC46A3 (461 aa).

The signal sequence occupies residues 1-25 (MKILFVEPAIFLSAFAMTLTGPLTT). Residues 26–73 (QYVYRRIWEETGNYTFSSDSNISECEKNKSSPIFAFQEEVQKKVSRFN) are Extracellular-facing. N-linked (GlcNAc...) asparagine glycosylation is found at Asn-38, Asn-46, and Asn-53. Residues 74–94 (LQMDISGLIPGLVSTFILLSI) traverse the membrane as a helical segment. Residues 95-101 (SDHYGRK) lie on the Cytoplasmic side of the membrane. A helical membrane pass occupies residues 102–124 (FPMILSSVGALATSVWLCLLCYF). At 125-133 (AFPFQLLIA) the chain is on the extracellular side. The chain crosses the membrane as a helical span at residues 134-156 (STFIGAFCGNYTTFWGACFAYIV). The Cytoplasmic segment spans residues 157–170 (DQCKEHKQKTIRIA). The helical transmembrane segment at 171–191 (IIDFLLGLVTGLTGLSSGYFI) threads the bilayer. Topologically, residues 192–197 (RELGFE) are extracellular. The helical transmembrane segment at 198 to 218 (WSFLIIAVSLAVNLIYILFFL) threads the bilayer. At 219–261 (GDPVKECSSQNVTMSCSEGFKNLFYRTYMLFKNASGKRRFLLC) the chain is on the cytoplasmic side. A helical transmembrane segment spans residues 262–282 (LLLFTVITYFFVVIGIAPIFI). At 283–294 (LYELDSPLCWNE) the chain is on the extracellular side. Residues 295 to 315 (VFIGYGSALGSASFLTSFLGI) form a helical membrane-spanning segment. The Cytoplasmic segment spans residues 316–324 (WLFSYCMED). The chain crosses the membrane as a helical span at residues 325–345 (IHMAFIGIFTTMTGMAMTAFA). The Extracellular portion of the chain corresponds to 346–347 (ST). The helical transmembrane segment at 348 to 368 (TLMMFLARVPFLFTIVPFSVL) threads the bilayer. Residues 369 to 382 (RSMLSKVVRSTEQG) are Cytoplasmic-facing. Residues 383 to 403 (TLFACIAFLETLGGVTAVSTF) traverse the membrane as a helical segment. The Extracellular segment spans residues 404-415 (NGIYSATVAWYP). A helical membrane pass occupies residues 416–436 (GFTFLLSAGLLLLPAISLCVV). Topologically, residues 437 to 461 (KCTSWNEGSYELLIQEESSEDASDR) are cytoplasmic. Residues 446–449 (YELL) carry the Tyrosine-based lysosomal-sorting motif motif.

Belongs to the major facilitator superfamily. SLC46A family.

The protein resides in the lysosome membrane. The enzyme catalyses estrone 3-sulfate(out) + n H(+)(out) = estrone 3-sulfate(in) + n H(+)(in). It carries out the reaction 25-hydroxyvitamin D3 sulfate(out) + n H(+)(out) = 25-hydroxyvitamin D3 sulfate(in) + n H(+)(in). The catalysed reaction is cholate(out) + n H(+)(out) = cholate(in) + n H(+)(in). It catalyses the reaction glycocholate(out) + n H(+)(out) = glycocholate(in) + n H(+)(in). The enzyme catalyses taurocholate(out) + n H(+)(out) = taurocholate(in) + n H(+)(in). It carries out the reaction dehydroepiandrosterone 3-sulfate(out) + n H(+)(out) = dehydroepiandrosterone 3-sulfate(in) + n H(+)(in). The catalysed reaction is N-acetyl-D-muramoyl-L-alanyl-D-isoglutamine(out) + n H(+)(out) = N-acetyl-D-muramoyl-L-alanyl-D-isoglutamine(in) + n H(+)(in). It catalyses the reaction 2',3'-cGAMP(out) + n H(+)(out) = 2',3'-cGAMP(in) + n H(+)(in). Its function is as follows. Lysosomal proton-coupled steroid conjugate and bile acid transporter. Preferentially recognizes lipophilic steroid conjugates or bile acis as endogenous substrates and seems to mediate escape from lysosomes to the cytoplasm. Modulates hepatic cytosolic copper homeostasis, maybe acting as a lysosomal copper transporter and sequestering copper ions in the lysosome. Transports catabolites of non-cleavable antibody-drug conjugates from the lysosome to the cytoplasm. Delivers pathogen-associated molecular patterns to cytosolic pattern recognition receptors as part of the innate immune response to microbes. Selectively transports bacterial muramyl dipeptide (MDP) into the cytosol for recognition by NOD2, triggering inflammatory responses. Likely acts as a redundant importer of cyclic GMP-AMP dinucleotides (cGAMPs) in monocyte and macrophage cell lineages. The transport mechanism, its electrogenicity and stoichiometry remain to be elucidated. The protein is Lysosomal proton-coupled steroid conjugate and bile acid symporter SLC46A3 of Homo sapiens (Human).